The primary structure comprises 246 residues: NLP effector protein 2 (246 aa).

The signal sequence occupies residues 1-19 (MKFVVFLCAIAAVVATIQG). Residues 113-123 (AIMYSWYFPKD) carry the Conserved undecapeptide motif I motif. Positions 130–136 (GHRHDWE) match the Hepta-peptide GHRHDWE motif II motif.

This sequence belongs to the Necrosis inducing protein (NPP1) family.

It localises to the secreted. Its function is as follows. Secreted effector that contributes strongly to virulence during infection by P.capsici. Causes large necrotic areas in both host C.annuum and non-host N.benthamiana. This Phytophthora capsici protein is NLP effector protein 2.